We begin with the raw amino-acid sequence, 462 residues long: BBSome complex member bbs-4 (462 aa).

The tract at residues 1-46 (MEASNQDEIIGTDVIPNEQDNPEEVVPEPTSLDVPPPPPERAPSAP) is disordered. 7 TPR repeats span residues 89–122 (EAAF…SGKN), 124–156 (RYFY…MKDN), 199–232 (ATLI…QPDN), 234–266 (EVMN…DPAN), 268–300 (QAIL…SDYN), 335–368 (YKIS…YPQN), and 369–402 (AKAV…KKNP).

Belongs to the BBS4 family. As to quaternary structure, part of BBSome complex, that contains at least bbs-1, bbs-2, bbs-4, bbs-5, osm-12, bbs-8/ttc-8 and bbs-9. Interacts (via C-terminus) with bbs-5; the interaction is direct.

It is found in the cytoplasm. The protein localises to the cytoskeleton. It localises to the microtubule organizing center. Its subcellular location is the centrosome. The protein resides in the cell projection. It is found in the cilium membrane. In terms of biological role, component of the BBSome complex. The BBSome complex is thought to function as a coat complex required for sorting of specific membrane proteins to the primary cilia. The BBSome complex is required for ciliogenesis but is dispensable for centriolar satellite function. Required for proper BBSome complex assembly and its ciliary localization. May be required for microtubule anchoring at the centrosome but not for microtubule nucleation. May be required for the dynein-mediated transport of pericentriolar proteins to the centrosome. Required, redundantly with bbs-5, for cilia biogenesis and both the assembly and movement of intraflagellar transport proteins along the ciliary axoneme. Plays a role in the removal of degraded mechanosensory receptors within the cilia. The protein is BBSome complex member bbs-4 of Caenorhabditis elegans.